The primary structure comprises 428 residues: Septin homolog spn7 (428 aa).

Positions 15–290 (KGKKLRIMVA…ENYRTEKLSN (276 aa)) constitute a Septin-type G domain. The interval 25 to 32 (GSSYTSYQ) is G1 motif. GTP is bound by residues 25–32 (GSSYTSYQ), Gly-86, 166–174 (NSNAFTEEE), and Gly-224. The segment at 83 to 86 (EVNG) is G3 motif. The tract at residues 165–168 (GNSN) is G4 motif. Disordered regions lie at residues 287–345 (KLSN…SEEL) and 387–414 (KEFPHRTTSSRNSLPNNTTKELEMKKMD). Positions 290–307 (NDSPSNTSLSLQKQNSIV) are enriched in polar residues. Positions 309 to 325 (NEDKRSVNGSERTETRS) are enriched in basic and acidic residues. Polar residues-rich tracts occupy residues 326–339 (SIDQSEMRTNVSDS) and 392–405 (RTTSSRNSLPNNTT).

The protein belongs to the TRAFAC class TrmE-Era-EngA-EngB-Septin-like GTPase superfamily. Septin GTPase family. As to quaternary structure, component of the sporulation-specific septin complex composed of at least spn2, spn5, spn6 and spn7.

Its subcellular location is the cytoplasm. The protein resides in the nucleus. It localises to the forespore membrane. Its function is as follows. Septin-like protein involved in the correct orientation of forespore membrane extension during sporulation. Binds phosphatidylinositol 4-phosphate. The polypeptide is Septin homolog spn7 (spn7) (Schizosaccharomyces pombe (strain 972 / ATCC 24843) (Fission yeast)).